A 226-amino-acid polypeptide reads, in one-letter code: Ribonuclease 3 (226 aa).

An RNase III domain is found at 7–129 (LPRLCRTLSY…IIGAVYLDSD (123 aa)). A Mg(2+)-binding site is contributed by glutamate 42. Residue aspartate 46 is part of the active site. Residues aspartate 115 and glutamate 118 each coordinate Mg(2+). Glutamate 118 is a catalytic residue. In terms of domain architecture, DRBM spans 156 to 226 (DAKTLLQEHL…AAQVLELLKK (71 aa)).

It belongs to the ribonuclease III family. As to quaternary structure, homodimer. It depends on Mg(2+) as a cofactor.

Its subcellular location is the cytoplasm. The enzyme catalyses Endonucleolytic cleavage to 5'-phosphomonoester.. Digests double-stranded RNA. Involved in the processing of primary rRNA transcript to yield the immediate precursors to the large and small rRNAs (23S and 16S). Processes some mRNAs, and tRNAs when they are encoded in the rRNA operon. Processes pre-crRNA and tracrRNA of type II CRISPR loci if present in the organism. This Shewanella baltica (strain OS223) protein is Ribonuclease 3.